The following is a 242-amino-acid chain: MATVSMRDMLKAGVHFGHQTRYWNPKMKPFIFGARNKVHIINLEKTVPMFNDALAEINKIAARKGKVLFVGTKRAASESVKESAISCDQYYVNNRWLGGMLTNWKTVRQSIKRLKELEIQSADGTFEKLTKKEALMRTREMEKLEKSLGGIKNMGGLPDAMFVIDADHEHIAIKEANNLGIPVFSIVDTNSNPDGVDFVIPGNDDAIRSIQLYTGAVAQTVTEARNQDIVVQAEQDGFVAEA.

The protein belongs to the universal ribosomal protein uS2 family.

In Photobacterium profundum (strain SS9), this protein is Small ribosomal subunit protein uS2.